Consider the following 446-residue polypeptide: Actin-related protein 6 (446 aa).

The segment covering 1–11 (MTGRGGAKKSR) has biased composition (basic residues). The disordered stretch occupies residues 1 to 24 (MTGRGGAKKSRAAGPAPPTTTLVL).

Belongs to the actin family. ARP6 subfamily. In terms of assembly, component of the SWR1 chromatin remodeling complex.

The protein resides in the cytoplasm. It localises to the cytoskeleton. Its subcellular location is the nucleus. Its function is as follows. Component of the SWR1 complex which mediates the ATP-dependent exchange of histone H2A for the H2A variant H2A.Z leading to transcriptional regulation of selected genes by chromatin remodeling. Involved in chromosome stability. The protein is Actin-related protein 6 (arp-6) of Neurospora crassa (strain ATCC 24698 / 74-OR23-1A / CBS 708.71 / DSM 1257 / FGSC 987).